The following is a 476-amino-acid chain: Glycogen synthase (476 aa).

Lys-15 contributes to the ADP-alpha-D-glucose binding site.

It belongs to the glycosyltransferase 1 family. Bacterial/plant glycogen synthase subfamily.

The enzyme catalyses [(1-&gt;4)-alpha-D-glucosyl](n) + ADP-alpha-D-glucose = [(1-&gt;4)-alpha-D-glucosyl](n+1) + ADP + H(+). It functions in the pathway glycan biosynthesis; glycogen biosynthesis. Its function is as follows. Synthesizes alpha-1,4-glucan chains using ADP-glucose. The sequence is that of Glycogen synthase from Yersinia enterocolitica serotype O:8 / biotype 1B (strain NCTC 13174 / 8081).